A 275-amino-acid chain; its full sequence is uncharacterized protein (275 aa).

Residues Glu71, Asp85, Ile87, and Asp88 each coordinate Mg(2+). Glu71 provides a ligand contact to substrate. 87 to 90 (IDGT) provides a ligand contact to substrate. Helical transmembrane passes span 87-107 (IDGTANFLSGIPLWAVSIAFV), 112-132 (PVLGAVALPALDTLLWASVDG), and 178-198 (IVCLGSCAAALAMVAAGRLAG). Asp208 contacts Mg(2+). Asp208 is a substrate binding site.

Belongs to the inositol monophosphatase superfamily.

Its subcellular location is the cell membrane. This is an uncharacterized protein from Sinorhizobium fredii (strain NBRC 101917 / NGR234).